A 426-amino-acid polypeptide reads, in one-letter code: Growth-regulating factor 9 (426 aa).

One can recognise a QLQ domain in the interval 92–127 (PFTPSQWMELEHQALIYKYLNAKAPIPSSLLISISK). One can recognise a WRC domain in the interval 151–195 (DPEPGRCRRTDGKKWRCSKEAMADHKYCERHINRNRHRSRKPVEN). Short sequence motifs (bipartite nuclear localization signal) lie at residues 156–166 (RCRRTDGKKWR) and 184–191 (RNRHRSRK). A disordered region spans residues 184-222 (RNRHRSRKPVENQSRKTVKETPCAGSLPSSVGQGSFKKA). Positions 191-202 (KPVENQSRKTVK) are enriched in basic and acidic residues.

This sequence belongs to the GRF family.

The protein localises to the nucleus. In terms of biological role, transcription activator that plays a regulatory role in gibberellin-induced stem elongation. The protein is Growth-regulating factor 9 (GRF9) of Oryza sativa subsp. japonica (Rice).